The chain runs to 889 residues: Alanine--tRNA ligase (889 aa).

Zn(2+) contacts are provided by histidine 564, histidine 568, cysteine 677, and histidine 681.

It belongs to the class-II aminoacyl-tRNA synthetase family. The cofactor is Zn(2+).

It is found in the cytoplasm. It carries out the reaction tRNA(Ala) + L-alanine + ATP = L-alanyl-tRNA(Ala) + AMP + diphosphate. Catalyzes the attachment of alanine to tRNA(Ala) in a two-step reaction: alanine is first activated by ATP to form Ala-AMP and then transferred to the acceptor end of tRNA(Ala). Also edits incorrectly charged Ser-tRNA(Ala) and Gly-tRNA(Ala) via its editing domain. The chain is Alanine--tRNA ligase from Rhodopseudomonas palustris (strain ATCC BAA-98 / CGA009).